A 383-amino-acid polypeptide reads, in one-letter code: Probable L-tyrosine/L-aspartate decarboxylase (383 aa).

Residue lysine 227 is modified to N6-(pyridoxal phosphate)lysine.

This sequence belongs to the group II decarboxylase family. MfnA subfamily. The cofactor is pyridoxal 5'-phosphate.

The catalysed reaction is L-tyrosine + H(+) = tyramine + CO2. It catalyses the reaction L-aspartate + H(+) = beta-alanine + CO2. It participates in cofactor biosynthesis; methanofuran biosynthesis. The protein operates within cofactor biosynthesis; coenzyme A biosynthesis. Catalyzes the decarboxylation of L-tyrosine to produce tyramine for methanofuran biosynthesis. Can also catalyze the decarboxylation of L-aspartate to produce beta-alanine for coenzyme A (CoA) biosynthesis. In Methanothrix thermoacetophila (strain DSM 6194 / JCM 14653 / NBRC 101360 / PT) (Methanosaeta thermophila), this protein is Probable L-tyrosine/L-aspartate decarboxylase.